A 263-amino-acid chain; its full sequence is Shikimate dehydrogenase (NADP(+)) (263 aa).

Residues 21 to 23 (TLS) and T67 contribute to the shikimate site. The Proton acceptor role is filled by K71. Residue E83 coordinates NADP(+). Residues N92 and D103 each contribute to the shikimate site. Residues 126–130 (GAGGA) and L204 each bind NADP(+). Y206 is a binding site for shikimate. G227 is a binding site for NADP(+).

Belongs to the shikimate dehydrogenase family. In terms of assembly, homodimer.

It carries out the reaction shikimate + NADP(+) = 3-dehydroshikimate + NADPH + H(+). It functions in the pathway metabolic intermediate biosynthesis; chorismate biosynthesis; chorismate from D-erythrose 4-phosphate and phosphoenolpyruvate: step 4/7. In terms of biological role, involved in the biosynthesis of the chorismate, which leads to the biosynthesis of aromatic amino acids. Catalyzes the reversible NADPH linked reduction of 3-dehydroshikimate (DHSA) to yield shikimate (SA). The chain is Shikimate dehydrogenase (NADP(+)) from Sulfolobus acidocaldarius (strain ATCC 33909 / DSM 639 / JCM 8929 / NBRC 15157 / NCIMB 11770).